Consider the following 22-residue polypeptide: Leptoglycin (22 aa).

Positions Gly1–Leu22 are disordered.

Expressed by the skin glands.

The protein localises to the secreted. In terms of biological role, antimicrobial protein. Has antibacterial activity against the Gram-negative bacteria E.coli ATCC 28922 (MIC=50 uM), P.aeruginosa ATCC 9027 (MIC=8 uM) and C.freundii ATCC 8090 (MIC=75 uM). Does not have hemolytic activity. In Leptodactylus pentadactylus (Smokey jungle frog), this protein is Leptoglycin.